Reading from the N-terminus, the 227-residue chain is MADNQIPITQIEDGTVKQPSVWRNLLIDGLWKNNGALVQLLGLCPLLAVSNSVTNALGLGLATLFVLLCTNVTISLFRQMIPHDIRIPIYVMVIATVVTAVQLLMNAFAYPVYQSLGIFIPLIVTNCIVIGRAEAYASKHQVHHSAFDGLATGLGMTLSLVLLGAIRELIGNGTLFDGLDLLFGDWAKVLRLDLLQLDSGLLLAILPPGAFIGLGLILAVKNLFDHK.

A run of 5 helical transmembrane segments spans residues 57-77, 89-109, 111-131, 146-166, and 200-220; these read LGLG…ISLF, IYVM…NAFA, PVYQ…IVIG, AFDG…LGAI, and GLLL…ILAV.

This sequence belongs to the NqrDE/RnfAE family. As to quaternary structure, the complex is composed of six subunits: RnfA, RnfB, RnfC, RnfD, RnfE and RnfG.

The protein resides in the cell inner membrane. Functionally, part of a membrane-bound complex that couples electron transfer with translocation of ions across the membrane. The polypeptide is Ion-translocating oxidoreductase complex subunit E (Haemophilus ducreyi (strain 35000HP / ATCC 700724)).